Here is a 517-residue protein sequence, read N- to C-terminus: Cytochrome P450 monooxygenase calE (517 aa).

N8 is a glycosylation site (N-linked (GlcNAc...) asparagine). The helical transmembrane segment at 14–34 (SLMHHYILIAILVASIIAMVV) threads the bilayer. C458 contributes to the heme binding site.

Belongs to the cytochrome P450 family. Requires heme as cofactor.

It localises to the membrane. Its pathway is secondary metabolite biosynthesis. Cytochrome P450 monooxygenase; part of the gene cluster that mediates the biosynthesis of calbistrin A and related compounds. Calbistrin A is a secondary metabolite with an interesting structure that was recently found to have bioactivity against leukemia cells. It consists of two polyketides linked by an ester bond: a bicyclic decalin containing polyketide and a linear 12 carbon dioic acid structure. The polyketide synthase calA is probably responsible for forming the decalin moiety. Because calA lacks a designated enoylreductase (ER) domain, the required activity is provided by the trans-enoyl reductase calK. Following release from the PKS, calF then probably catalyzes the oxidation and the subsequent Diels Alder cycloisomerization that lead to the formation of the decalin moiety. The decalin polyketide backbone includes two C-methyl groups, at C7 and C11 in backbone, of which the C7 position is probably methylated by the methyltransferase domain of calA. A candidate for adding the methyl group at C11, if not done by CalA, is the cluster methyltransferase calH. Several additional tailoring enzymes within the cluster could be involved in the modification of the decalin polyketide product. Those include the 3 cytochrome P450 monooxygenases CalE, CalG and CalL, of which one might be responsible for the introduction of the extra hydroxyl group attached to the backbone of the decalin moiety, at position C9 in the backbone, that allows for attachment of the linear moiety. One tailoring enzyme activity that is expected to be involved in biosynthesis of calbistrin is an acyltransferase for connecting the two polyketide synthase products, and which could be performed by the cluster acyltransferase calJ. The enzyme responsible for the biosynthesis of the linear moiety, probably a second PKS, has not been identified yet. The protein is Cytochrome P450 monooxygenase calE of Penicillium decumbens.